The chain runs to 184 residues: C-phycoerythrin class 1 subunit beta (184 aa).

Positions 50 and 61 each coordinate (2R,3E)-phycoerythrobilin. Asparagine 72 is modified (N4-methylasparagine). The (2R,3E)-phycoerythrobilin site is built by cysteine 82 and cysteine 165.

This sequence belongs to the phycobiliprotein family. In terms of assembly, heterodimer of an alpha and a beta chain. In terms of processing, contains three covalently linked phycoerythrobilin chromophores.

It localises to the cellular thylakoid membrane. Functionally, light-harvesting photosynthetic bile pigment-protein from the phycobiliprotein complex. This chain is C-phycoerythrin class 1 subunit beta (cpeB), found in Synechococcus sp. (strain WH8020).